The following is a 421-amino-acid chain: F-box only protein 9 (421 aa).

Positions 1-63 (MAESNQNTDG…AELRRRQETA (63 aa)) are disordered. Residues 11–20 (AVEEGEDENT) are compositionally biased toward acidic residues. Positions 40–52 (LQPSSGGQRSFSR) are enriched in polar residues. Over residues 54 to 63 (AELRRRQETA) the composition is skewed to basic and acidic residues. A TPR repeat occupies 68–101 (ARELFLKAVEEEQNGAVYEAIKYYKSAMQLVPDI). An F-box domain is found at 158 to 209 (QVHISALPFEVLMYIFRWVVSCDLDLRALEQLSLVCRGFYICARDPEIWRSA).

In terms of assembly, part of the SCF (SKP1-CUL1-F-box) E3 ubiquitin-protein ligase complex SCF(fbxo9).

Its subcellular location is the cytoplasm. It functions in the pathway protein modification; protein ubiquitination. Functionally, substrate recognition component of a SCF (SKP1-CUL1-F-box protein) E3 ubiquitin-protein ligase complex which mediates the ubiquitination and subsequent proteasomal degradation of target proteins and acts as a regulator of mTOR signaling. This chain is F-box only protein 9 (fbxo9), found in Danio rerio (Zebrafish).